The sequence spans 365 residues: Peptide chain release factor 2 (365 aa).

Q252 is modified (N5-methylglutamine).

Belongs to the prokaryotic/mitochondrial release factor family. Methylated by PrmC. Methylation increases the termination efficiency of RF2.

It is found in the cytoplasm. Peptide chain release factor 2 directs the termination of translation in response to the peptide chain termination codons UGA and UAA. The chain is Peptide chain release factor 2 from Escherichia coli (strain K12 / MC4100 / BW2952).